A 274-amino-acid chain; its full sequence is 2,3,4,5-tetrahydropyridine-2,6-dicarboxylate N-succinyltransferase (274 aa).

Belongs to the transferase hexapeptide repeat family.

It localises to the cytoplasm. The enzyme catalyses (S)-2,3,4,5-tetrahydrodipicolinate + succinyl-CoA + H2O = (S)-2-succinylamino-6-oxoheptanedioate + CoA. The protein operates within amino-acid biosynthesis; L-lysine biosynthesis via DAP pathway; LL-2,6-diaminopimelate from (S)-tetrahydrodipicolinate (succinylase route): step 1/3. The protein is 2,3,4,5-tetrahydropyridine-2,6-dicarboxylate N-succinyltransferase of Delftia acidovorans (strain DSM 14801 / SPH-1).